The chain runs to 416 residues: Serine hydroxymethyltransferase (416 aa).

(6S)-5,6,7,8-tetrahydrofolate contacts are provided by residues Leu121 and 125-127 (GHL). Position 230 is an N6-(pyridoxal phosphate)lysine (Lys230).

The protein belongs to the SHMT family. As to quaternary structure, homodimer. Pyridoxal 5'-phosphate serves as cofactor.

The protein localises to the cytoplasm. The enzyme catalyses (6R)-5,10-methylene-5,6,7,8-tetrahydrofolate + glycine + H2O = (6S)-5,6,7,8-tetrahydrofolate + L-serine. Its pathway is one-carbon metabolism; tetrahydrofolate interconversion. It participates in amino-acid biosynthesis; glycine biosynthesis; glycine from L-serine: step 1/1. Functionally, catalyzes the reversible interconversion of serine and glycine with tetrahydrofolate (THF) serving as the one-carbon carrier. This reaction serves as the major source of one-carbon groups required for the biosynthesis of purines, thymidylate, methionine, and other important biomolecules. Also exhibits THF-independent aldolase activity toward beta-hydroxyamino acids, producing glycine and aldehydes, via a retro-aldol mechanism. This is Serine hydroxymethyltransferase from Nitrosomonas eutropha (strain DSM 101675 / C91 / Nm57).